Consider the following 1165-residue polypeptide: ATP-dependent helicase/deoxyribonuclease subunit B (1165 aa).

The 298-residue stretch at 1–298 (MALRFILGRA…AHLEREFFRR (298 aa)) folds into the UvrD-like helicase ATP-binding domain. 8–15 (GRAGTGKT) is a binding site for ATP. One can recognise a UvrD-like helicase C-terminal domain in the interval 279–584 (PARFRANPAL…QLALIPPALD (306 aa)). Cys800, Cys1119, Cys1122, and Cys1128 together coordinate [4Fe-4S] cluster.

This sequence belongs to the helicase family. AddB/RexB type 1 subfamily. In terms of assembly, heterodimer of AddA and AddB. Mg(2+) is required as a cofactor. It depends on [4Fe-4S] cluster as a cofactor.

Functionally, the heterodimer acts as both an ATP-dependent DNA helicase and an ATP-dependent, dual-direction single-stranded exonuclease. Recognizes the chi site generating a DNA molecule suitable for the initiation of homologous recombination. The AddB subunit has 5' -&gt; 3' nuclease activity but not helicase activity. In Desulforudis audaxviator (strain MP104C), this protein is ATP-dependent helicase/deoxyribonuclease subunit B.